The chain runs to 142 residues: Membrane protein YneK (142 aa).

The chain crosses the membrane as a helical span at residues 6-26; the sequence is FLWFILFWVIMMVVLLSIGGF.

Interacts with the N-terminal D1 domain of dynamin-like protein DynA.

The protein localises to the cell membrane. The chain is Membrane protein YneK (yneK) from Bacillus subtilis (strain 168).